The chain runs to 207 residues: Octanoyltransferase (207 aa).

Residues 27 to 203 (ADTEDELWVV…HLETQFTPKA (177 aa)) enclose the BPL/LPL catalytic domain. Substrate is bound by residues 66 to 73 (RGGQITYH), 133 to 135 (SLG), and 146 to 148 (GLA). The active-site Acyl-thioester intermediate is Cys164.

It belongs to the LipB family.

Its subcellular location is the cytoplasm. It catalyses the reaction octanoyl-[ACP] + L-lysyl-[protein] = N(6)-octanoyl-L-lysyl-[protein] + holo-[ACP] + H(+). It participates in protein modification; protein lipoylation via endogenous pathway; protein N(6)-(lipoyl)lysine from octanoyl-[acyl-carrier-protein]: step 1/2. Catalyzes the transfer of endogenously produced octanoic acid from octanoyl-acyl-carrier-protein onto the lipoyl domains of lipoate-dependent enzymes. Lipoyl-ACP can also act as a substrate although octanoyl-ACP is likely to be the physiological substrate. The chain is Octanoyltransferase from Neisseria meningitidis serogroup A / serotype 4A (strain DSM 15465 / Z2491).